A 377-amino-acid chain; its full sequence is uncharacterized protein (377 aa).

Residues 1-22 form the signal peptide; sequence MKFKYGTVVLGSFLGLSVVLAA. Residue Cys23 is the site of N-palmitoyl cysteine attachment. Cys23 is lipidated: S-diacylglycerol cysteine. Residues 217-260 form a disordered region; sequence AKANGETNQKGRKAAKSNKTALVQLKNGADTTTNEENKDTKTSD. Residues 251–260 are compositionally biased toward basic and acidic residues; it reads EENKDTKTSD.

The protein belongs to the MG185/MG260 family.

The protein localises to the cell membrane. This is an uncharacterized protein from Mycoplasma pneumoniae (strain ATCC 29342 / M129 / Subtype 1) (Mycoplasmoides pneumoniae).